Consider the following 326-residue polypeptide: Metallophosphoesterase domain-containing protein 1 (326 aa).

It belongs to the UPF0046 family. In terms of tissue distribution, expressed predominantly in adult brain.

Its function is as follows. May have metallophosphoesterase activity (in vitro). This is Metallophosphoesterase domain-containing protein 1 (MPPED1) from Homo sapiens (Human).